A 235-amino-acid polypeptide reads, in one-letter code: Pro-opiomelanocortin (235 aa).

A signal peptide spans 1–26; it reads MPRFCNSRSGALLLALLLQTSIDVWS. At F87 the chain carries Phenylalanine amide. The interval 88 to 128 is disordered; that stretch reads GPRNSSSAGGSAQRRAEEETAGGDGRPEPSPREGKRSYSME. Over residues 112–128 the composition is skewed to basic and acidic residues; sequence GRPEPSPREGKRSYSME. Position 124 is an N-acetylserine; in Corticotropin (S124). Valine amide is present on V136. A glycan (N-linked (GlcNAc...) asparagine) is linked at N152. S154 carries the phosphoserine modification. A disordered region spans residues 169–209; sequence EQPDGLEQVLEPDTEKADGPYRVEHFRWGNPPKDKRYGGFM. Over residues 181 to 205 the composition is skewed to basic and acidic residues; sequence DTEKADGPYRVEHFRWGNPPKDKRY.

This sequence belongs to the POMC family. Specific enzymatic cleavages at paired basic residues yield the different active peptides. ACTH and MSH are produced by the pituitary gland.

Its subcellular location is the secreted. In terms of biological role, stimulates the adrenal glands to release cortisol. Anorexigenic peptide. Increases the pigmentation of skin by increasing melanin production in melanocytes. Functionally, increases the pigmentation of skin by increasing melanin production in melanocytes. Its function is as follows. Endogenous orexigenic opiate. In terms of biological role, endogenous opiate. In Rattus norvegicus (Rat), this protein is Pro-opiomelanocortin (Pomc).